A 256-amino-acid polypeptide reads, in one-letter code: Autophagy-related protein 40 (256 aa).

A signal peptide spans 1–16; sequence MFNLILWPLFLLTSVA. Topologically, residues 17 to 67 are lumenal; it reads IPLQLTLEVVYLTSSVDFSKASAAKTATSLGQSPVVITIYKSLLKYWSLYE. Residues 68–88 form a helical membrane-spanning segment; it reads FIHFIYLYTPIDAFLNFLPFT. The Cytoplasmic portion of the chain corresponds to 89–256; the sequence is SLLMSFGSIC…DILDETTELD (168 aa). The segment at 197–243 is disordered; sequence QPQGDKNRYQNGDRESTKNGAAYQKSSQQSSSFEQNFTSTEFPNDYD. Positions 199–213 are enriched in basic and acidic residues; sequence QGDKNRYQNGDREST. Low complexity predominate over residues 222–238; it reads SSQQSSSFEQNFTSTEF. Residues 242 to 245 carry the ATG8-binding motif; that stretch reads YDFM.

As to quaternary structure, interacts with ATG8 and ATG11.

It localises to the endoplasmic reticulum membrane. The protein localises to the preautophagosomal structure membrane. Its function is as follows. Acts as a receptor for reticulophagy. Directs autophagic sequestration of folded tubules/sheets derived from the cortical endoplasmic reticulum (cER) and the cytoplasmic endoplasmic reticulum (cytoER) into autophagosomes. Is not required for the cytoplasm-to-vacuole targeting pathway, mitophagy, pexophagy, and non-selective autophagy. The sequence is that of Autophagy-related protein 40 from Saccharomyces cerevisiae (strain ATCC 204508 / S288c) (Baker's yeast).